Reading from the N-terminus, the 324-residue chain is Phospho-N-acetylmuramoyl-pentapeptide-transferase (324 aa).

Transmembrane regions (helical) follow at residues 5–25, 50–70, 77–97, 117–137, 147–167, 176–196, 203–223, 227–247, 250–270, and 302–322; these read VILF…PILI, GTPT…AIVM, LSAE…LGFL, LIGQ…CHFS, LSID…VGGS, LDGL…ILAW, VAIF…FNAH, VFMG…VAIL, LEIL…SVIL, and VVVT…YIEV.

Belongs to the glycosyltransferase 4 family. MraY subfamily. It depends on Mg(2+) as a cofactor.

It localises to the cell membrane. It carries out the reaction UDP-N-acetyl-alpha-D-muramoyl-L-alanyl-gamma-D-glutamyl-meso-2,6-diaminopimeloyl-D-alanyl-D-alanine + di-trans,octa-cis-undecaprenyl phosphate = di-trans,octa-cis-undecaprenyl diphospho-N-acetyl-alpha-D-muramoyl-L-alanyl-D-glutamyl-meso-2,6-diaminopimeloyl-D-alanyl-D-alanine + UMP. It functions in the pathway cell wall biogenesis; peptidoglycan biosynthesis. In terms of biological role, catalyzes the initial step of the lipid cycle reactions in the biosynthesis of the cell wall peptidoglycan: transfers peptidoglycan precursor phospho-MurNAc-pentapeptide from UDP-MurNAc-pentapeptide onto the lipid carrier undecaprenyl phosphate, yielding undecaprenyl-pyrophosphoryl-MurNAc-pentapeptide, known as lipid I. The protein is Phospho-N-acetylmuramoyl-pentapeptide-transferase of Bacillus velezensis (strain DSM 23117 / BGSC 10A6 / LMG 26770 / FZB42) (Bacillus amyloliquefaciens subsp. plantarum).